Reading from the N-terminus, the 229-residue chain is Large ribosomal subunit protein uL1 (229 aa).

The protein belongs to the universal ribosomal protein uL1 family. As to quaternary structure, part of the 50S ribosomal subunit.

Functionally, binds directly to 23S rRNA. The L1 stalk is quite mobile in the ribosome, and is involved in E site tRNA release. In terms of biological role, protein L1 is also a translational repressor protein, it controls the translation of the L11 operon by binding to its mRNA. In Streptococcus pyogenes serotype M1, this protein is Large ribosomal subunit protein uL1.